We begin with the raw amino-acid sequence, 335 residues long: Dihydroorotate dehydrogenase (quinone) (335 aa).

Residues 58-62 and Thr-82 each bind FMN; that span reads AGADK. Substrate is bound at residue Lys-62. 107–111 is a binding site for substrate; that stretch reads NRNGF. 2 residues coordinate FMN: Asn-135 and Asn-168. Residue Asn-168 coordinates substrate. Ser-171 (nucleophile) is an active-site residue. A substrate-binding site is contributed by Asn-173. Residues Lys-213 and Gly-241 each coordinate FMN. 242 to 243 lines the substrate pocket; it reads NT. Residues Gly-264, Gly-293, and 314 to 315 each bind FMN; that span reads YS.

Belongs to the dihydroorotate dehydrogenase family. Type 2 subfamily. As to quaternary structure, monomer. FMN is required as a cofactor.

It is found in the cell membrane. It catalyses the reaction (S)-dihydroorotate + a quinone = orotate + a quinol. Its pathway is pyrimidine metabolism; UMP biosynthesis via de novo pathway; orotate from (S)-dihydroorotate (quinone route): step 1/1. Catalyzes the conversion of dihydroorotate to orotate with quinone as electron acceptor. The polypeptide is Dihydroorotate dehydrogenase (quinone) (Haemophilus ducreyi (strain 35000HP / ATCC 700724)).